The sequence spans 138 residues: Cysteine desulfuration protein SufE (138 aa).

The Cysteine persulfide intermediate role is filled by Cys-51.

Belongs to the SufE family. As to quaternary structure, homodimer. Interacts with SufS.

It is found in the cytoplasm. It participates in cofactor biosynthesis; iron-sulfur cluster biosynthesis. In terms of biological role, participates in cysteine desulfuration mediated by SufS. Cysteine desulfuration mobilizes sulfur from L-cysteine to yield L-alanine and constitutes an essential step in sulfur metabolism for biosynthesis of a variety of sulfur-containing biomolecules. Functions as a sulfur acceptor for SufS, by mediating the direct transfer of the sulfur atom from the S-sulfanylcysteine of SufS, an intermediate product of cysteine desulfuration process. The protein is Cysteine desulfuration protein SufE of Shigella flexneri serotype 5b (strain 8401).